Reading from the N-terminus, the 83-residue chain is Mitochondrial import inner membrane translocase subunit Tim8 (83 aa).

The Twin CX3C motif signature appears at 35-60 (CWDVCFSDYRPPSKMDGKTQTCIQNC). Disulfide bonds link cysteine 35–cysteine 60 and cysteine 39–cysteine 56.

Belongs to the small Tim family. As to quaternary structure, heterohexamer; composed of 3 copies of ddp-1/tim-8 and 3 copies of tin-13/tim-13, named soluble 70 kDa complex. Associates with the TIM22 complex, whose core is composed of tim-22.

It is found in the mitochondrion inner membrane. Functionally, mitochondrial intermembrane chaperone that participates in the import and insertion of some multi-pass transmembrane proteins into the mitochondrial inner membrane. Also required for the transfer of beta-barrel precursors from the TOM complex to the sorting and assembly machinery (SAM complex) of the outer membrane. Acts as a chaperone-like protein that protects the hydrophobic precursors from aggregation and guide them through the mitochondrial intermembrane space. The ddp-1/tim-8-tim-13 complex mediates the import of some proteins while the predominant tim-9/tin-9.1-tim-10/tin-10 70 kDa complex mediates the import of much more proteins. This Caenorhabditis briggsae protein is Mitochondrial import inner membrane translocase subunit Tim8.